The chain runs to 159 residues: Insertion element IS136 uncharacterized 16.9 kDa protein (159 aa).

The span at 126–142 (RSFVSPSSSTPSTARSS) shows a compositional bias: low complexity. Positions 126-159 (RSFVSPSSSTPSTARSSPGRPLPMQAFPAQTCAT) are disordered.

In Agrobacterium tumefaciens (strain T37), this protein is Insertion element IS136 uncharacterized 16.9 kDa protein.